The primary structure comprises 438 residues: ATP synthase subunit alpha, chloroplastic (438 aa).

ATP is bound at residue 170–177; it reads GDRQTGKT.

It belongs to the ATPase alpha/beta chains family. F-type ATPases have 2 components, CF(1) - the catalytic core - and CF(0) - the membrane proton channel. CF(1) has five subunits: alpha(3), beta(3), gamma(1), delta(1), epsilon(1). CF(0) has four main subunits: a, b, b' and c.

It localises to the plastid. It is found in the chloroplast thylakoid membrane. It carries out the reaction ATP + H2O + 4 H(+)(in) = ADP + phosphate + 5 H(+)(out). Its function is as follows. Produces ATP from ADP in the presence of a proton gradient across the membrane. The alpha chain is a regulatory subunit. This is ATP synthase subunit alpha, chloroplastic from Ochrosphaera neapolitana.